The chain runs to 297 residues: Nicotinate-nucleotide pyrophosphorylase [carboxylating] (297 aa).

The segment at leucine 8–proline 12 is important for hexamer formation. Residues arginine 102, arginine 138–lysine 139, histidine 160–arginine 161, lysine 171, glutamate 201, aspartate 222, serine 248–glycine 250, and glycine 270 contribute to the quinolinate site.

Belongs to the NadC/ModD family. As to quaternary structure, hexamer formed by 3 homodimers.

The enzyme catalyses nicotinate beta-D-ribonucleotide + CO2 + diphosphate = quinolinate + 5-phospho-alpha-D-ribose 1-diphosphate + 2 H(+). It functions in the pathway cofactor biosynthesis; NAD(+) biosynthesis; nicotinate D-ribonucleotide from quinolinate: step 1/1. With respect to regulation, activity toward QA is slightly repressed by phosphoribosylpyrophosphate (PRPP) in both a competitive and a non-competitive manner. Competitively inhibited by phthalic acid (PHT). In terms of biological role, involved in the catabolism of quinolinic acid (QA). This is Nicotinate-nucleotide pyrophosphorylase [carboxylating] (QPRT) from Homo sapiens (Human).